A 442-amino-acid polypeptide reads, in one-letter code: tRNA modification GTPase MnmE (442 aa).

3 residues coordinate (6S)-5-formyl-5,6,7,8-tetrahydrofolate: R27, E84, and K124. One can recognise a TrmE-type G domain in the interval 221–366; that stretch reads GLHVVIVGAP…LLDALQAFAE (146 aa). GTP is bound by residues 231–236, 250–256, and 275–278; these read NAGKSS, SEEAGTT, and DTAG. The Mg(2+) site is built by S235 and T256. K442 is a (6S)-5-formyl-5,6,7,8-tetrahydrofolate binding site.

It belongs to the TRAFAC class TrmE-Era-EngA-EngB-Septin-like GTPase superfamily. TrmE GTPase family. Homodimer. Heterotetramer of two MnmE and two MnmG subunits. K(+) serves as cofactor.

It localises to the cytoplasm. Exhibits a very high intrinsic GTPase hydrolysis rate. Involved in the addition of a carboxymethylaminomethyl (cmnm) group at the wobble position (U34) of certain tRNAs, forming tRNA-cmnm(5)s(2)U34. The polypeptide is tRNA modification GTPase MnmE (Brucella melitensis biotype 1 (strain ATCC 23456 / CCUG 17765 / NCTC 10094 / 16M)).